A 129-amino-acid chain; its full sequence is Large ribosomal subunit protein bL17 (129 aa).

This sequence belongs to the bacterial ribosomal protein bL17 family. In terms of assembly, part of the 50S ribosomal subunit. Contacts protein L32.

This chain is Large ribosomal subunit protein bL17, found in Desulfotalea psychrophila (strain LSv54 / DSM 12343).